A 609-amino-acid chain; its full sequence is Sporulation-specific protein 21 (609 aa).

Disordered stretches follow at residues M1–S50, P68–S96, and K124–G165. Polar residues predominate over residues M10 to N31. Basic and acidic residues predominate over residues H32–D43. Positions P68–S81 are enriched in low complexity. Polar residues-rich tracts occupy residues N82–S96 and S127–N136. Over residues S143–S159 the composition is skewed to low complexity. 3 coiled-coil regions span residues R283–S342, R357–F393, and E424–E483. The interval D586 to K609 is disordered. A compositionally biased stretch (polar residues) spans Q587–K609.

This sequence belongs to the MPC70 family. In terms of assembly, interacts directly with MPC54, NUD1 and SPC42. Interacts with ADY3. Interacts with ADY4. Probable component of a SPB complex composed of ADY3, SSP1, DON1, MPC54, SPO21/MPC70, NUD1 and CNM67.

It is found in the prospore membrane. It localises to the cytoplasm. Its subcellular location is the cytoskeleton. The protein resides in the spindle pole. Functionally, involved in the pathway that organizes the shaping and sizing of the prospore membrane (PSM) during sporulation. May provide a meiosis-specific scaffold for the assembly of other proteins on spindle pole bodies (SPBs), and may be a limiting component for SPB formation. The protein is Sporulation-specific protein 21 (SPO21) of Saccharomyces cerevisiae (strain ATCC 204508 / S288c) (Baker's yeast).